We begin with the raw amino-acid sequence, 447 residues long: Pentatricopeptide repeat-containing protein At3g53170 (447 aa).

10 PPR repeats span residues 93-127 (RCKT…GLKP), 128-158 (TIDV…MKSV), 164-198 (DVFT…GVGC), 199-233 (STVT…GDSL), 235-269 (DVCT…GVQP), 270-304 (DITT…FFSL), 305-339 (TTVT…GVKP), 340-374 (NSIT…DVVL), 375-409 (DTPF…KCKP), and 410-444 (DKIT…GENL).

This sequence belongs to the PPR family. P subfamily.

The chain is Pentatricopeptide repeat-containing protein At3g53170 from Arabidopsis thaliana (Mouse-ear cress).